A 628-amino-acid polypeptide reads, in one-letter code: Nuclear RNA export factor 1 (628 aa).

Residues 47–83 (DTQSRYEDDDEPAVPVRASLTSASSRGRGGSSRGFGQ) are disordered. Residues 63–72 (RASLTSASSR) are compositionally biased toward low complexity. Residues 100 to 179 (YKCRATGAAK…EFYTSKVPAP (80 aa)) form the RRM domain. LRR repeat units follow at residues 245 to 270 (NIVA…SIAK) and 271 to 294 (FVME…FAGL). An NTF2 domain is found at 365–526 (LVEQFVTSYF…VAVISDQLFI (162 aa)). A TAP-C domain is found at 576–628 (PIREEMIKAMCQFSGMIPPFSEKCLADCAWNFDFACQKFNEIKSSVPAEAFAH).

Belongs to the NXF family. Interacts with nucleoporins, Nup98, Nup153 and Nup214.

Its subcellular location is the nucleus. In terms of biological role, involved in RNA export from the nucleus to the cytoplasm. The protein is Nuclear RNA export factor 1 (nxf-1) of Caenorhabditis elegans.